We begin with the raw amino-acid sequence, 333 residues long: Meiotic recombination protein rec24 (333 aa).

The protein belongs to the MEI4L family. As to quaternary structure, interacts with Rec7, as part of the meiotic recombination initiation complex.

The protein resides in the cytoplasm. It localises to the nucleus. Required for correct meiotic chromosome segregation and recombination. Accessory protein required for Rec12 activity, which is involved in formation of the double-strand breaks (DSBs) that initiate meiotic recombination. In Schizosaccharomyces pombe (strain 972 / ATCC 24843) (Fission yeast), this protein is Meiotic recombination protein rec24 (rec24).